The primary structure comprises 77 residues: Acyl carrier protein (77 aa).

Positions 2 to 77 constitute a Carrier domain; sequence SSIEERVNKI…SAVDYIKAHS (76 aa). At serine 37 the chain carries O-(pantetheine 4'-phosphoryl)serine.

The protein belongs to the acyl carrier protein (ACP) family. In terms of processing, 4'-phosphopantetheine is transferred from CoA to a specific serine of apo-ACP by AcpS. This modification is essential for activity because fatty acids are bound in thioester linkage to the sulfhydryl of the prosthetic group.

The protein resides in the cytoplasm. Its pathway is lipid metabolism; fatty acid biosynthesis. In terms of biological role, carrier of the growing fatty acid chain in fatty acid biosynthesis. This chain is Acyl carrier protein, found in Alcanivorax borkumensis (strain ATCC 700651 / DSM 11573 / NCIMB 13689 / SK2).